The following is a 121-amino-acid chain: Large ribosomal subunit protein P2 (121 aa).

The span at valine 72–proline 99 shows a compositional bias: low complexity. The segment at valine 72–aspartate 121 is disordered.

This sequence belongs to the eukaryotic ribosomal protein P1/P2 family. P1 and P2 exist as dimers at the large ribosomal subunit. Phosphorylated.

Its function is as follows. Plays an important role in the elongation step of protein synthesis. The sequence is that of Large ribosomal subunit protein P2 from Taenia solium (Pork tapeworm).